The primary structure comprises 441 residues: ATP-dependent RNA helicase SUB2-1 (441 aa).

Positions 1 to 19 (MSHEGEEDLLEYSDNEQDI) are enriched in acidic residues. Residues 1–46 (MSHEGEEDLLEYSDNEQDIQVDASKAAEPSELDATTAEDASNGDAE) are disordered. The Q motif signature appears at 57–85 (TGFKDFLLKPELARAIIDCGFEHPSEVQQ). The 176-residue stretch at 88 to 263 (IPQSIHGTDV…RRFLQNPLEI (176 aa)) folds into the Helicase ATP-binding domain. ATP is bound at residue 101 to 108 (AKSGLGKT). The DECD box signature appears at 210–213 (DECD). Residues 291-436 (KLAQLLDDLE…EFPEEGIDPS (146 aa)) enclose the Helicase C-terminal domain.

It belongs to the DEAD box helicase family. DECD subfamily.

It is found in the nucleus. The catalysed reaction is ATP + H2O = ADP + phosphate + H(+). Functionally, ATP-binding RNA helicase involved in transcription elongation and required for the export of mRNA out of the nucleus. SUB2 also plays a role in pre-mRNA splicing and spliceosome assembly. May be involved in rDNA and telomeric silencing, and maintenance of genome integrity. The chain is ATP-dependent RNA helicase SUB2-1 (SUB2-1) from Vanderwaltozyma polyspora (strain ATCC 22028 / DSM 70294 / BCRC 21397 / CBS 2163 / NBRC 10782 / NRRL Y-8283 / UCD 57-17) (Kluyveromyces polysporus).